A 241-amino-acid chain; its full sequence is Venom nerve growth factor (241 aa).

The first 18 residues, 1 to 18 (MSMLCYTLIIAFLIGIWA), serve as a signal peptide directing secretion. A propeptide spanning residues 19–122 (APKSEDNVPL…SLNRNIRAKR (104 aa)) is cleaved from the precursor. Intrachain disulfides connect C136-C201, C179-C229, and C189-C231. A glycan (N-linked (GlcNAc...) asparagine) is linked at N145.

This sequence belongs to the NGF-beta family. In terms of assembly, homodimer; non-covalently linked. In terms of tissue distribution, expressed by the venom gland.

The protein localises to the secreted. Its function is as follows. Nerve growth factor is important for the development and maintenance of the sympathetic and sensory nervous systems. It stimulates division and differentiation of sympathetic and embryonic sensory neurons as well as basal forebrain cholinergic neurons in the brain. Its relevance in the snake venom is not clear. However, it has been shown to inhibit metalloproteinase-dependent proteolysis of platelet glycoprotein Ib alpha, suggesting a metalloproteinase inhibition to prevent metalloprotease autodigestion and/or protection against prey proteases. Binds a lipid between the two protein chains in the homodimer. The lipid-bound form promotes histamine relase from mouse mast cells, contrary to the lipid-free form. The protein is Venom nerve growth factor of Crotalus durissus terrificus (South American rattlesnake).